A 424-amino-acid polypeptide reads, in one-letter code: Serine--tRNA ligase (424 aa).

230-232 (TAE) is a binding site for L-serine. Residue 261 to 263 (RSE) participates in ATP binding. Glu-284 is a binding site for L-serine. 348–351 (EISS) provides a ligand contact to ATP. Ser-384 provides a ligand contact to L-serine.

This sequence belongs to the class-II aminoacyl-tRNA synthetase family. Type-1 seryl-tRNA synthetase subfamily. In terms of assembly, homodimer. The tRNA molecule binds across the dimer.

It localises to the cytoplasm. The enzyme catalyses tRNA(Ser) + L-serine + ATP = L-seryl-tRNA(Ser) + AMP + diphosphate + H(+). It carries out the reaction tRNA(Sec) + L-serine + ATP = L-seryl-tRNA(Sec) + AMP + diphosphate + H(+). It functions in the pathway aminoacyl-tRNA biosynthesis; selenocysteinyl-tRNA(Sec) biosynthesis; L-seryl-tRNA(Sec) from L-serine and tRNA(Sec): step 1/1. Functionally, catalyzes the attachment of serine to tRNA(Ser). Is also able to aminoacylate tRNA(Sec) with serine, to form the misacylated tRNA L-seryl-tRNA(Sec), which will be further converted into selenocysteinyl-tRNA(Sec). This Streptococcus pneumoniae serotype 2 (strain D39 / NCTC 7466) protein is Serine--tRNA ligase.